The sequence spans 600 residues: Glutamine--fructose-6-phosphate aminotransferase [isomerizing] (600 aa).

Cys-2 serves as the catalytic Nucleophile; for GATase activity. A Glutamine amidotransferase type-2 domain is found at 2 to 217; it reads CGIVGYIGQL…DKEMVIVTDD (216 aa). SIS domains are found at residues 283–422 and 452–590; these read IAAA…KNGI and IARE…VDKP. The For Fru-6P isomerization activity role is filled by Lys-595.

As to quaternary structure, homodimer.

Its subcellular location is the cytoplasm. The enzyme catalyses D-fructose 6-phosphate + L-glutamine = D-glucosamine 6-phosphate + L-glutamate. Its function is as follows. Catalyzes the first step in hexosamine metabolism, converting fructose-6P into glucosamine-6P using glutamine as a nitrogen source. The polypeptide is Glutamine--fructose-6-phosphate aminotransferase [isomerizing] (glmS) (Bacillus spizizenii (strain ATCC 23059 / NRRL B-14472 / W23) (Bacillus subtilis subsp. spizizenii)).